A 711-amino-acid chain; its full sequence is MND1-interacting protein 1 (711 aa).

Residues Glu390–Asn648 are a coiled coil. 2 disordered regions span residues Glu552–Asn571 and Arg602–Lys622. Basic and acidic residues predominate over residues Arg602–Ser611. An RING-type zinc finger spans residues Cys653–Arg697.

As to quaternary structure, interacts (via C-terminal domain) with MND1 and HOP2. Interacts with XRI1 (via C-terminal domain).

This Arabidopsis thaliana (Mouse-ear cress) protein is MND1-interacting protein 1 (MIP1).